Consider the following 297-residue polypeptide: Probable oxidoreductase (297 aa).

An NAD(+)-binding site is contributed by 9-33 (VVTGGASGLGAETVRALAAAGAEVT). Serine 138 lines the substrate pocket. Tyrosine 164 acts as the Proton acceptor in catalysis.

Belongs to the short-chain dehydrogenases/reductases (SDR) family.

The polypeptide is Probable oxidoreductase (Streptomyces lividans).